The sequence spans 216 residues: Small ribosomal subunit protein uS3c (216 aa).

In terms of domain architecture, KH type-2 spans 43–118 (IKNYLQKNMR…KLNIAITRIT (76 aa)).

It belongs to the universal ribosomal protein uS3 family. Part of the 30S ribosomal subunit.

It is found in the plastid. Its subcellular location is the chloroplast. This is Small ribosomal subunit protein uS3c (rps3) from Eucalyptus globulus subsp. globulus (Tasmanian blue gum).